The following is a 254-amino-acid chain: Alcohol dehydrogenase 1 (254 aa).

Residue 10–33 participates in NAD(+) binding; the sequence is FVAGLGGIGLDTSREIVKSGPKNL. Ser-138 provides a ligand contact to substrate. The Proton acceptor role is filled by Tyr-151.

The protein belongs to the short-chain dehydrogenases/reductases (SDR) family. Homodimer.

It catalyses the reaction a primary alcohol + NAD(+) = an aldehyde + NADH + H(+). It carries out the reaction a secondary alcohol + NAD(+) = a ketone + NADH + H(+). In Drosophila hydei (Fruit fly), this protein is Alcohol dehydrogenase 1 (Adh1).